The sequence spans 354 residues: UDP-N-acetylglucosamine--N-acetylmuramyl-(pentapeptide) pyrophosphoryl-undecaprenol N-acetylglucosamine transferase (354 aa).

UDP-N-acetyl-alpha-D-glucosamine-binding positions include 15–17 (TGG), asparagine 127, arginine 163, serine 191, isoleucine 244, 263–268 (ALTVSE), and glutamine 288.

The protein belongs to the glycosyltransferase 28 family. MurG subfamily.

The protein resides in the cell inner membrane. The enzyme catalyses di-trans,octa-cis-undecaprenyl diphospho-N-acetyl-alpha-D-muramoyl-L-alanyl-D-glutamyl-meso-2,6-diaminopimeloyl-D-alanyl-D-alanine + UDP-N-acetyl-alpha-D-glucosamine = di-trans,octa-cis-undecaprenyl diphospho-[N-acetyl-alpha-D-glucosaminyl-(1-&gt;4)]-N-acetyl-alpha-D-muramoyl-L-alanyl-D-glutamyl-meso-2,6-diaminopimeloyl-D-alanyl-D-alanine + UDP + H(+). The protein operates within cell wall biogenesis; peptidoglycan biosynthesis. Cell wall formation. Catalyzes the transfer of a GlcNAc subunit on undecaprenyl-pyrophosphoryl-MurNAc-pentapeptide (lipid intermediate I) to form undecaprenyl-pyrophosphoryl-MurNAc-(pentapeptide)GlcNAc (lipid intermediate II). This is UDP-N-acetylglucosamine--N-acetylmuramyl-(pentapeptide) pyrophosphoryl-undecaprenol N-acetylglucosamine transferase from Aliivibrio fischeri (strain ATCC 700601 / ES114) (Vibrio fischeri).